Consider the following 98-residue polypeptide: DNA-binding protein Fis (98 aa).

Positions 74 to 93 form a DNA-binding region, H-T-H motif; sequence QTRAAVMMGINRGTLRKKLK.

This sequence belongs to the transcriptional regulatory Fis family. In terms of assembly, homodimer.

Functionally, activates ribosomal RNA transcription. Plays a direct role in upstream activation of rRNA promoters. The chain is DNA-binding protein Fis from Aeromonas hydrophila subsp. hydrophila (strain ATCC 7966 / DSM 30187 / BCRC 13018 / CCUG 14551 / JCM 1027 / KCTC 2358 / NCIMB 9240 / NCTC 8049).